The following is a 523-amino-acid chain: UDP-glucuronosyltransferase 3A1 (523 aa).

A signal peptide spans 1–22; it reads MAGQQALLLFGFILPGLLFSEA. Residues 23 to 483 lie on the Extracellular side of the membrane; the sequence is AKILTVSLVG…HAFQQPWYEQ (461 aa). The N-linked (GlcNAc...) asparagine glycan is linked to Asn52. The chain crosses the membrane as a helical span at residues 484–504; the sequence is YLLDVFLFLLVVTLGTMWLCG. The Cytoplasmic segment spans residues 505-523; the sequence is KLLGLVARWLCGARKLKKA.

The protein belongs to the UDP-glycosyltransferase family.

The protein localises to the membrane. It carries out the reaction glucuronate acceptor + UDP-alpha-D-glucuronate = acceptor beta-D-glucuronoside + UDP + H(+). Its function is as follows. UDP-glucuronosyltransferases catalyze phase II biotransformation reactions in which lipophilic substrates are conjugated with glucuronic acid to increase water solubility and enhance excretion. They are of major importance in the conjugation and subsequent elimination of potentially toxic xenobiotics and endogenous compounds. This is UDP-glucuronosyltransferase 3A1 (UGT3A1) from Bos taurus (Bovine).